A 550-amino-acid polypeptide reads, in one-letter code: Acetyl-coenzyme A transporter 1 (550 aa).

Over methionine 1–serine 74 the chain is Cytoplasmic. Serine 42 is modified (phosphoserine). Residues isoleucine 75–isoleucine 95 form a helical membrane-spanning segment. At proline 96 to serine 113 the chain is on the extracellular side. An N-linked (GlcNAc...) asparagine glycan is attached at asparagine 103. A helical membrane pass occupies residues phenylalanine 114–phenylalanine 134. At lysine 135–lysine 141 the chain is on the cytoplasmic side. Residues serine 142 to valine 162 traverse the membrane as a helical segment. At aspartate 163–threonine 256 the chain is on the extracellular side. Residues leucine 257 to leucine 277 form a helical membrane-spanning segment. Residues leucine 278–lysine 300 lie on the Cytoplasmic side of the membrane. A helical membrane pass occupies residues leucine 301–serine 321. Residues lysine 322–glutamate 344 lie on the Extracellular side of the membrane. The chain crosses the membrane as a helical span at residues histidine 345 to serine 365. Topologically, residues lysine 366–asparagine 375 are cytoplasmic. The chain crosses the membrane as a helical span at residues isoleucine 376–tryptophan 396. The Extracellular portion of the chain corresponds to tryptophan 397–glycine 405. A helical transmembrane segment spans residues glycine 406 to leucine 426. The Cytoplasmic portion of the chain corresponds to tyrosine 427–aspartate 509. The chain crosses the membrane as a helical span at residues glycine 510–glycine 530. Over proline 531 to asparagine 550 the chain is Extracellular.

The protein belongs to the SLC33A transporter family. In terms of assembly, homodimerizes. In terms of tissue distribution, expressed in brain at all developmental stages. Detected in hippocampus, hypothalamus, cerebellum, cortex, olfactory bulb, and the ventral and dorsal anterior olfactory nucleus.

The protein localises to the endoplasmic reticulum membrane. The enzyme catalyses acetyl-CoA(in) = acetyl-CoA(out). Functionally, acetyl-CoA transporter that mediates active acetyl-CoA import through the endoplasmic reticulum (ER) membrane into the ER lumen where specific ER-based acetyl-CoA:lysine acetyltransferases are responsible for the acetylation of ER-based protein substrates, such as BACE1. Necessary for O-acetylation of gangliosides. In Rattus norvegicus (Rat), this protein is Acetyl-coenzyme A transporter 1 (Slc33a1).